The chain runs to 222 residues: Uclacyanin-3 (222 aa).

An N-terminal signal peptide occupies residues 1 to 21; it reads MGSTVAAALLLFLAAVPAVFA. In terms of domain architecture, Phytocyanin spans 22–120; it reads ATFKVGDISG…GMKLAVPVLA (99 aa). The Cu cation site is built by His61, Cys102, His107, and Met112. Cys74 and Cys108 are disulfide-bonded. Residues 121 to 198 form a disordered region; that stretch reads AAPSPSTPSS…APLPPSLSPN (78 aa). Pro residues-rich tracts occupy residues 125 to 172 and 185 to 195; these read PSTP…PSAS and TPPPAPLPPSL. Asn198 carries the GPI-anchor amidated asparagine lipid modification. The propeptide at 199–222 is removed in mature form; the sequence is AASKGVMSYGIIGVTMILMYAVMT.

Its subcellular location is the cell membrane. In terms of biological role, probably acts as an electron carrier involved in oxygen activation and/or lignin formation. The protein is Uclacyanin-3 (UCC3) of Arabidopsis thaliana (Mouse-ear cress).